Here is a 109-residue protein sequence, read N- to C-terminus: Putative double-stranded DNA mimic protein YciU (109 aa).

The protein belongs to the putative dsDNA mimic protein family.

Its function is as follows. May act as a double-stranded DNA (dsDNA) mimic. Probably regulates the activity of a dsDNA-binding protein. The sequence is that of Putative double-stranded DNA mimic protein YciU from Shigella flexneri.